A 224-amino-acid chain; its full sequence is uncharacterized protein (224 aa).

This is an uncharacterized protein from Acidianus hospitalis (AFV-1).